The chain runs to 303 residues: Kynurenine formamidase (303 aa).

Residues 95–99 carry the HGGXW motif; sequence HGGYW. The active-site Nucleophile is Ser164. Catalysis depends on residues Asp247 and His279.

Belongs to the kynurenine formamidase family. Homodimer.

It is found in the cytoplasm. The protein resides in the cytosol. The protein localises to the nucleus. The enzyme catalyses N-formyl-L-kynurenine + H2O = L-kynurenine + formate + H(+). Its pathway is amino-acid degradation; L-tryptophan degradation via kynurenine pathway; L-kynurenine from L-tryptophan: step 2/2. Functionally, catalyzes the hydrolysis of N-formyl-L-kynurenine to L-kynurenine, the second step in the kynurenine pathway of tryptophan degradation. Kynurenine may be further oxidized to nicotinic acid, NAD(H) and NADP(H). Required for elimination of toxic metabolites. The polypeptide is Kynurenine formamidase (Homo sapiens (Human)).